A 698-amino-acid polypeptide reads, in one-letter code: DNA ligase (698 aa).

NAD(+)-binding positions include 35 to 39 (DSVYD), 84 to 85 (SL), and E123. Catalysis depends on K125, which acts as the N6-AMP-lysine intermediate. Residues R146, E183, K302, and K326 each contribute to the NAD(+) site. Zn(2+) is bound by residues C420, C423, C438, and C443. One can recognise a BRCT domain in the interval 612–698 (NGKGHLNGQT…QNSADTIHLL (87 aa)).

This sequence belongs to the NAD-dependent DNA ligase family. LigA subfamily. The cofactor is Mg(2+). Requires Mn(2+) as cofactor.

The catalysed reaction is NAD(+) + (deoxyribonucleotide)n-3'-hydroxyl + 5'-phospho-(deoxyribonucleotide)m = (deoxyribonucleotide)n+m + AMP + beta-nicotinamide D-nucleotide.. Its function is as follows. DNA ligase that catalyzes the formation of phosphodiester linkages between 5'-phosphoryl and 3'-hydroxyl groups in double-stranded DNA using NAD as a coenzyme and as the energy source for the reaction. It is essential for DNA replication and repair of damaged DNA. This chain is DNA ligase, found in Synechococcus sp. (strain WH7803).